A 409-amino-acid polypeptide reads, in one-letter code: Peptidase T (409 aa).

Position 79 (His-79) interacts with Zn(2+). Residue Asp-81 is part of the active site. Asp-140 is a Zn(2+) binding site. The active-site Proton acceptor is Glu-174. Residues Glu-175, Asp-197, and His-379 each coordinate Zn(2+).

It belongs to the peptidase M20B family. The cofactor is Zn(2+).

The protein localises to the cytoplasm. The catalysed reaction is Release of the N-terminal residue from a tripeptide.. Functionally, cleaves the N-terminal amino acid of tripeptides. In Lysinibacillus sphaericus (strain C3-41), this protein is Peptidase T.